The following is a 482-amino-acid chain: ATP synthase subunit beta (482 aa).

ATP is bound at residue 161-168 (GGAGVGKT).

This sequence belongs to the ATPase alpha/beta chains family. As to quaternary structure, F-type ATPases have 2 components, CF(1) - the catalytic core - and CF(0) - the membrane proton channel. CF(1) has five subunits: alpha(3), beta(3), gamma(1), delta(1), epsilon(1). CF(0) has three main subunits: a(1), b(2) and c(9-12). The alpha and beta chains form an alternating ring which encloses part of the gamma chain. CF(1) is attached to CF(0) by a central stalk formed by the gamma and epsilon chains, while a peripheral stalk is formed by the delta and b chains.

Its subcellular location is the cell inner membrane. It carries out the reaction ATP + H2O + 4 H(+)(in) = ADP + phosphate + 5 H(+)(out). Its function is as follows. Produces ATP from ADP in the presence of a proton gradient across the membrane. The catalytic sites are hosted primarily by the beta subunits. The protein is ATP synthase subunit beta of Anaeromyxobacter dehalogenans (strain 2CP-C).